Here is a 350-residue protein sequence, read N- to C-terminus: MFKVFPFTAIGHPHAITAPRLVVKMSAIATKNAVESLVVKPPAHPTYDLKGVIQLALSEDAGDLGDVTCKATIPVVMESEAHFLAKEDGIVAGIALAEMIFAEVDPSLKMEWSISDGDKVHKGLKFGKVQGKAHSIVIAERVVLNFMQRMSGIATLTKAMADAAHPATILETRKTAPGLRLVDKWAVLIGGGKNHRMGLFDMVMIKDNHISAAGGVSKALNSVDQYLEQNKLQMGVEVETRTIAEVLEVLDYASRTKTSLTRIMLDNMVVPLSDGDIEVSMLNEAVDLINGRFETEASGNVTLETVHKIGQTGVTYISSGALTHSVKALDISLKIDTELALEVGRRTKRA.

Substrate-binding positions include arginine 141, 172–174 (TRK), arginine 196, lysine 206, glutamate 239, aspartate 266, 298–300 (SGN), and 319–321 (SGA).

Belongs to the NadC/ModD family.

It catalyses the reaction nicotinate beta-D-ribonucleotide + CO2 + diphosphate = quinolinate + 5-phospho-alpha-D-ribose 1-diphosphate + 2 H(+). The protein operates within alkaloid biosynthesis; nicotine biosynthesis. Its pathway is cofactor biosynthesis; NAD(+) biosynthesis; nicotinate D-ribonucleotide from quinolinate: step 1/1. Its function is as follows. Involved in the biosynthesis of pyridine alkaloid natural products, leading mainly to the production of anabasine, anatabine, nicotine and nornicotine, effective deterrents against herbivores with antiparasitic and pesticide properties (neurotoxins); nornicotine serves as the precursor in the synthesis of the carcinogen compound N'-nitrosonornicotine (NNN). Involved in the catabolism of quinolinic acid (QA). The polypeptide is Quinolinate phosphoribosyltransferase [decarboxylating] 1 (Nicotiana glauca (Glaucous tobacco)).